The following is a 125-amino-acid chain: uncharacterized protein (125 aa).

Disordered regions lie at residues 1–27 and 76–125; these read MNKT…GSSS and NKNN…RFKK. The segment covering 18-27 has biased composition (low complexity); sequence GMNSTTGSSS.

This is an uncharacterized protein from Dictyostelium discoideum (Social amoeba).